The chain runs to 652 residues: Beta-mannosyltransferase 1 (652 aa).

The Cytoplasmic segment spans residues 1–15; sequence MVDLFQWLKFYSMRR. The chain crosses the membrane as a helical span at residues 16-34; the sequence is LGQVAITLVLLNLFVFLGY. Residues 35–652 lie on the Extracellular side of the membrane; that stretch reads KFTPSTVIGS…LYQLQEEERS (618 aa). The N-linked (GlcNAc...) asparagine glycan is linked to Asn57. Positions 535–652 form a coiled coil; that stretch reads PARYAKQMEN…LYQLQEEERS (118 aa). Positions 536–621 are disordered; sequence ARYAKQMENE…EAKENEAKKK (86 aa).

This sequence belongs to the BMT family.

The protein localises to the membrane. Its function is as follows. Beta-mannosyltransferase involved in cell wall biosynthesis. Involved in the beta-mannosylation of outer chains of N-glycans. The chain is Beta-mannosyltransferase 1 (BMT1) from Komagataella phaffii (strain ATCC 76273 / CBS 7435 / CECT 11047 / NRRL Y-11430 / Wegner 21-1) (Yeast).